The chain runs to 382 residues: Palmitoyltransferase ZDHHC16B (382 aa).

Topologically, residues 1–75 are cytoplasmic; that stretch reads MRSWRWSVSR…IYWLVDNMTR (75 aa). A helical transmembrane segment spans residues 76–96; it reads WFGVVFVCLVMALTSSVVVIV. At 97-107 the chain is on the lumenal side; the sequence is YLCVLPIIFSS. The chain crosses the membrane as a helical span at residues 108-130; that stretch reads YPVYWILWHLCYGHWNLLMVVFH. Residues 131-196 are Cytoplasmic-facing; that stretch reads YYKATTTQPG…NNCVGHFNHR (66 aa). The DHHC domain maps to 153–203; sequence TICKKCIVPKPARTHHCSICNRCILKMDHHCPWLNNCVGHFNHRYFFSFCL. The active-site S-palmitoyl cysteine intermediate is Cys-183. Residues 197 to 217 traverse the membrane as a helical segment; it reads YFFSFCLFMTMGCVYCSISAK. The Lumenal segment spans residues 218 to 275; the sequence is DMFLDAYNAIESGRYKGGASQGEAVPGAGLIYISFQHQSSYQTPPPAFTHQERMVHKS. A helical membrane pass occupies residues 276–296; it reads LVYLWVLTSSVAVALGALTLW. At 297-382 the chain is on the cytoplasmic side; that stretch reads HAILITRGET…PAYKSSTTAI (86 aa).

Belongs to the DHHC palmitoyltransferase family.

It is found in the endoplasmic reticulum membrane. It catalyses the reaction L-cysteinyl-[protein] + hexadecanoyl-CoA = S-hexadecanoyl-L-cysteinyl-[protein] + CoA. Its function is as follows. Palmitoyl acyltransferase that mediates palmitoylation of proteins and is required during embryonic heart development. Involved in the proliferation of neural stem cells by regulating the FGF/ERK pathway. The polypeptide is Palmitoyltransferase ZDHHC16B (Danio rerio (Zebrafish)).